We begin with the raw amino-acid sequence, 127 residues long: Holo-[acyl-carrier-protein] synthase (127 aa).

Residues D8 and E59 each coordinate Mg(2+).

The protein belongs to the P-Pant transferase superfamily. AcpS family. Requires Mg(2+) as cofactor.

It is found in the cytoplasm. The catalysed reaction is apo-[ACP] + CoA = holo-[ACP] + adenosine 3',5'-bisphosphate + H(+). Functionally, transfers the 4'-phosphopantetheine moiety from coenzyme A to a Ser of acyl-carrier-protein. The chain is Holo-[acyl-carrier-protein] synthase from Rickettsia bellii (strain OSU 85-389).